Reading from the N-terminus, the 306-residue chain is Epoxyqueuosine reductase (306 aa).

Asp-131 functions as the Proton donor in the catalytic mechanism. In terms of domain architecture, 4Fe-4S ferredoxin-type spans 173–205; it reads LDLTYDHPVTDHCGTCTACIDACPTQAIVQPYV. Cys-185, Cys-188, Cys-191, Cys-195, Cys-211, Cys-238, Cys-241, and Cys-245 together coordinate [4Fe-4S] cluster.

The protein belongs to the QueG family. Monomer. The cofactor is cob(II)alamin. [4Fe-4S] cluster is required as a cofactor.

It is found in the cytoplasm. It carries out the reaction epoxyqueuosine(34) in tRNA + AH2 = queuosine(34) in tRNA + A + H2O. It participates in tRNA modification; tRNA-queuosine biosynthesis. Catalyzes the conversion of epoxyqueuosine (oQ) to queuosine (Q), which is a hypermodified base found in the wobble positions of tRNA(Asp), tRNA(Asn), tRNA(His) and tRNA(Tyr). This is Epoxyqueuosine reductase from Cellulophaga algicola (strain DSM 14237 / IC166 / ACAM 630).